The following is a 113-amino-acid chain: Large ribosomal subunit protein bL19 (113 aa).

The protein belongs to the bacterial ribosomal protein bL19 family.

In terms of biological role, this protein is located at the 30S-50S ribosomal subunit interface and may play a role in the structure and function of the aminoacyl-tRNA binding site. The chain is Large ribosomal subunit protein bL19 from Nocardia farcinica (strain IFM 10152).